An 85-amino-acid polypeptide reads, in one-letter code: Conotoxin Vx15a (85 aa).

The N-terminal stretch at 1–23 is a signal peptide; the sequence is MEKLTVLILVATVLLTIQVLAQS. The propeptide occupies 24 to 49; the sequence is DGDKHLMKRSKQYATKRLSALMRGHR. Pyrrolidone carboxylic acid is present on Q50.

This sequence belongs to the conotoxin O2 superfamily. Post-translationally, contains 4 disulfide bonds. Expressed by the venom duct.

The protein localises to the secreted. In Conus vexillum (Flag cone), this protein is Conotoxin Vx15a.